A 276-amino-acid polypeptide reads, in one-letter code: Large ribosomal subunit protein uL2 (276 aa).

Positions 223-276 (GVAMNPVDHPHGGGEGRGKGHHPTSPWGLPTKGYKTRRGKRPSDKFIVRRRNEA) are disordered. Basic and acidic residues-rich tracts occupy residues 230–240 (DHPHGGGEGRG) and 263–276 (RPSD…RNEA).

Belongs to the universal ribosomal protein uL2 family. Part of the 50S ribosomal subunit. Forms a bridge to the 30S subunit in the 70S ribosome.

In terms of biological role, one of the primary rRNA binding proteins. Required for association of the 30S and 50S subunits to form the 70S ribosome, for tRNA binding and peptide bond formation. It has been suggested to have peptidyltransferase activity; this is somewhat controversial. Makes several contacts with the 16S rRNA in the 70S ribosome. The chain is Large ribosomal subunit protein uL2 from Thermotoga petrophila (strain ATCC BAA-488 / DSM 13995 / JCM 10881 / RKU-1).